A 103-amino-acid chain; its full sequence is Alpha-ketoglutarate dehydrogenase component 4 (103 aa).

N-acetylmethionine is present on Met-1. Residue Lys-5 is modified to N6-succinyllysine. The interval 23 to 70 is disordered; that stretch reads IRFPDRRDNPKPNVSEVLRSAGLPSHTSSISQHSKGSKSPDWLMHQGP. Over residues 47 to 61 the composition is skewed to low complexity; the sequence is SHTSSISQHSKGSKS. Ser-61 and Ser-90 each carry phosphoserine.

This sequence belongs to the alpha-ketoglutarate dehydrogenase component 4 family. In terms of assembly, component of the 2-oxoglutarate dehydrogenase complex (OGDHC), composed of OGDH (2-oxoglutarate dehydrogenase; also called E1 subunit), DLST (dihydrolipoamide succinyltransferase; also called E2 subunit) and DLD (dihydrolipoamide dehydrogenase; also called E3 subunit), and the assembly factor KGD4. Within OGDHC complex, interacts (via N-terminus) with E3 subunit and (via C-terminus) with E2 subunit.

Its subcellular location is the mitochondrion. Functionally, molecular adapter that is necessary to form a stable 2-oxoglutarate dehydrogenase enzyme complex (OGDHC). Enables the specific recruitment of E3 subunit to E2 subunit in the 2-oxoglutarate dehydrogenase complex (OGDHC). The sequence is that of Alpha-ketoglutarate dehydrogenase component 4 (KGD4) from Bos taurus (Bovine).